A 205-amino-acid polypeptide reads, in one-letter code: Probable GTP-binding protein EngB (205 aa).

An EngB-type G domain is found at Gln29–Ser203. Residues Gly37 to Ser44, Gly64 to Met68, Asp82 to Gly85, Thr149 to Asp152, and Phe182 to Ser184 contribute to the GTP site. Mg(2+) is bound by residues Ser44 and Thr66.

It belongs to the TRAFAC class TrmE-Era-EngA-EngB-Septin-like GTPase superfamily. EngB GTPase family. Mg(2+) is required as a cofactor.

Its function is as follows. Necessary for normal cell division and for the maintenance of normal septation. In Coxiella burnetii (strain RSA 493 / Nine Mile phase I), this protein is Probable GTP-binding protein EngB.